Reading from the N-terminus, the 714-residue chain is Delta-like protein 1 (714 aa).

An N-terminal signal peptide occupies residues 1–17 (MGRRSALALAVVSALLC). Residues 18–537 (QVWSSGVFEL…VAAQGGSFPW (520 aa)) are Extracellular-facing. The region spanning 176–220 (FVCDEHYYGEGCSVFCRPRDDAFGHFTCGERGEKMCDPGWKGQYC) is the DSL domain. Intrachain disulfides connect Cys178–Cys187, Cys191–Cys203, Cys211–Cys220, Cys225–Cys236, Cys229–Cys242, Cys244–Cys253, Cys256–Cys267, Cys262–Cys273, Cys275–Cys284, Cys291–Cys303, Cys297–Cys313, Cys315–Cys324, Cys331–Cys342, Cys336–Cys351, Cys353–Cys362, Cys369–Cys380, Cys374–Cys390, Cys392–Cys401, Cys408–Cys419, Cys413–Cys428, Cys430–Cys439, Cys446–Cys457, Cys451–Cys466, Cys468–Cys477, Cys484–Cys495, Cys489–Cys504, and Cys506–Cys515. 3 EGF-like domains span residues 225-253 (CLPG…GRYC), 256-284 (CIRY…GLFC), and 291-324 (CTHH…GANC). Residues 331–362 (CAPSPCRNGGSCTDLEDSYSCTCPPGFYGKVC) enclose the EGF-like 4; calcium-binding domain. 2 consecutive EGF-like domains span residues 369–401 (CADG…GFNC) and 408–439 (CSSS…GRYC). The 32-residue stretch at 446–477 (CASSPCANGGTCRDSVNDFSCTCPPGYTGRNC) folds into the EGF-like 7; calcium-binding domain. The N-linked (GlcNAc...) asparagine glycan is linked to Asn476. The EGF-like 8 domain maps to 484–515 (CEHAPCHNGATCHQRGQRYMCECAQGYGGANC). Residues 538–560 (VAVCAGVVLVLLLLLGCAAVVVC) form a helical membrane-spanning segment. Topologically, residues 561–714 (VRLKLQKHQP…KDECVIATEV (154 aa)) are cytoplasmic. Lys605 participates in a covalent cross-link: Glycyl lysine isopeptide (Lys-Gly) (interchain with G-Cter in ubiquitin). A Phosphothreonine modification is found at Thr630. A compositionally biased stretch (basic and acidic residues) spans 644–656 (ATVRDAHSKRDTK). The tract at residues 644-690 (ATVRDAHSKRDTKCQSQGSVGEEKSTSTLRGGEVPDRKRPESVYSTS) is disordered. Ser685 is subject to Phosphoserine; by PKB. Position 688 is a phosphoserine (Ser688). Residues 711–714 (ATEV) form an interaction with MAGI1 region.

As to quaternary structure, homodimer. Interacts with TJP1. Interacts with MAGI1 (via PDZ domain); forms a complex with CTNNB1 and CDH2 and promotes recruitment to the adherens junction and stabilization on the cell surface. Interacts with PSEN1; undergoes a presenilin-dependent gamma-secretase cleavage that releases a Dll1-intracellular form. Interacts with MFAP5. Interacts with MIB1. Interacts with NEURL1B; leads to ubiquitination. Interacts with NEURL1. Interacts with SYNJ2BP; enhances DLL1 protein stability, and promotes Notch signaling in endothelial cells. Interacts with MAGI1, MAGI2, MAGI3 and MPDZ. Interacts (via ubiquitin) with EPN1 (via IUM domain); binding with NOTCH1 attached to neighboring cell, promotes ligand ubiquitination and EPN1 interaction, leading to NECD transendocytosis and Notch signaling. Interacts with NOTCH1. Post-translationally, ubiquitinated by MIB (MIB1 or MIB2), leading to its endocytosis and subsequent degradation. Ubiquitinated; promotes recycling back to the plasma membrane and confers a strong affinity for NOTCH1. Mono- and multi-ubiquitinated. Multi-ubiquitination of Lys-605 by MIB1 promotes both cis and trans-interaction with NOTCH1, as well as activation of Notch signaling. Ubiquitinated by NEURL1B. In terms of processing, phosphorylated in a membrane association-dependent manner. Phosphorylation at Ser-688 requires the presence of Ser-685, whereas phosphorylation at Thr-630 and Ser-685 occur independently of the other sites. Phosphorylation is required for full ligand activity in vitro and affects surface presentation, ectodomain shedding, and endocytosis. O-fucosylated. Can be elongated to a disaccharide by MFNG.

It localises to the apical cell membrane. The protein resides in the cell junction. It is found in the adherens junction. Its subcellular location is the membrane raft. In terms of biological role, transmembrane ligand protein of NOTCH1, NOTCH2 and NOTCH3 receptors that binds the extracellular domain (ECD) of Notch receptor in a cis and trans fashion manner. Following transinteraction, ligand cells produce mechanical force that depends of a clathrin-mediated endocytosis, requiring ligand ubiquitination, EPN1 interaction, and actin polymerisation; these events promote Notch receptor extracellular domain (NECD) transendocytosis and triggers Notch signaling through induction of cleavage, hyperphosphorylation, and nuclear accumulation of the intracellular domain of Notch receptors (NICD). Is required for embryonic development and maintenance of adult stem cells in many different tissues and immune systeme; the DLL1-induced Notch signaling is mediated through an intercellular communication that regulates cell lineage, cell specification, cell patterning and morphogenesis through effects on differentiation and proliferation. Plays a role in brain development at different level, namely by regulating neuronal differentiation of neural precursor cells via cell-cell interaction, most likely through the lateral inhibitory system in an endogenous level dependent-manner. During neocortex development, Dll1-Notch signaling transmission is mediated by dynamic interactions between intermediate neurogenic progenitors and radial glia; the cell-cell interactions are mediated via dynamic and transient elongation processes, likely to reactivate/maintain Notch activity in neighboring progenitors, and coordinate progenitor cell division and differentiation across radial and zonal boundaries. During cerebellar development, regulates Bergmann glial monolayer formation and its morphological maturation through a Notch signaling pathway. At the retina and spinal cord level, regulates neurogenesis by preventing the premature differentiation of neural progenitors and also by maintaining progenitors in spinal cord through Notch signaling pathway. Also controls neurogenesis of the neural tube in a progenitor domain-specific fashion along the dorsoventral axis. Maintains quiescence of neural stem cells and plays a role as a fate determinant that segregates asymmetrically to one daughter cell during neural stem cells mitosis, resulting in neuronal differentiation in Dll1-inheriting cell. Plays a role in immune systeme development, namely the development of all T-cells and marginal zone (MZ) B cells. Blocks the differentiation of progenitor cells into the B-cell lineage while promoting the emergence of a population of cells with the characteristics of a T-cell/NK-cell precursor. Also plays a role during muscle development. During early development, inhibits myoblasts differentiation from the medial dermomyotomal lip and later regulates progenitor cell differentiation. Directly modulates cell adhesion and basal lamina formation in satellite cells through Notch signaling. Maintains myogenic progenitors pool by suppressing differentiation through down-regulation of MYOD1 and is required for satellite cell homing and PAX7 expression. During craniofacial and trunk myogenesis suppresses differentiation of cranial mesoderm-derived and somite-derived muscle via MYOD1 regulation but in cranial mesoderm-derived progenitors, is neither required for satellite cell homing nor for PAX7 expression. Also plays a role during pancreatic cell development. During type B pancreatic cell development, may be involved in the initiation of proximodistal patterning in the early pancreatic epithelium. Stimulates multipotent pancreatic progenitor cells proliferation and pancreatic growth by maintaining HES1 expression and PTF1A protein levels. During fetal stages of development, is required to maintain arterial identity and the responsiveness of arterial endothelial cells for VEGFA through regulation of KDR activation and NRP1 expression. Controls sprouting angiogenesis and subsequent vertical branch formation through regulation on tip cell differentiation. Negatively regulates goblet cell differentiation in intestine and controls secretory fat commitment through lateral inhibition in small intestine. Plays a role during inner ear development; negatively regulates auditory hair cell differentiation. Plays a role during nephron development through Notch signaling pathway. Regulates growth, blood pressure and energy homeostasis. The polypeptide is Delta-like protein 1 (Dll1) (Rattus norvegicus (Rat)).